An 819-amino-acid chain; its full sequence is Myosin light chain kinase 3 (819 aa).

Disordered stretches follow at residues 146-256 (VPWR…TPSE), 273-334 (VVSP…TPPR), and 347-462 (EMLM…EQDC). Phosphoserine is present on S152. 2 stretches are compositionally biased toward basic and acidic residues: residues 158 to 170 (EENKERVEEEGGK) and 183 to 196 (DAREPGEESQKADV). Residues 307 to 318 (GPGPQCPGPPGL) show a composition bias toward pro residues. 3 positions are modified to phosphoserine: S355, S401, and S408. The 256-residue stretch at 515–770 (VCQHEVLGGG…ATQCLKHEWL (256 aa)) folds into the Protein kinase domain. ATP is bound by residues 521–529 (LGGGRFGQV) and K544. D636 functions as the Proton acceptor in the catalytic mechanism.

The protein belongs to the protein kinase superfamily. CAMK Ser/Thr protein kinase family. Mg(2+) is required as a cofactor. Post-translationally, phosphorylated on serine residues. As to expression, restricted to heart.

Its subcellular location is the cytoplasm. The enzyme catalyses L-seryl-[myosin light chain] + ATP = O-phospho-L-seryl-[myosin light chain] + ADP + H(+). It catalyses the reaction L-threonyl-[myosin light chain] + ATP = O-phospho-L-threonyl-[myosin light chain] + ADP + H(+). Functionally, kinase that phosphorylates MYL2 in vitro. Promotes sarcomere formation in cardiomyocytes and increases cardiomyocyte contractility. The protein is Myosin light chain kinase 3 (MYLK3) of Homo sapiens (Human).